The primary structure comprises 576 residues: Vesicular glutamate transporter 1 (576 aa).

Over 1–63 (MEFRKEEFKK…CTCFGLPRRY (63 aa)) the chain is Cytoplasmic. Residues 64-84 (IIAIMSGLGFCISFGIRCNLG) traverse the membrane as a helical segment. The Vesicular portion of the chain corresponds to 85 to 116 (VAIVSMVNNNTVYKGNKIVIEQAQFTWDPETV). Residue Asn93 is glycosylated (N-linked (GlcNAc...) asparagine). The helical transmembrane segment at 117–137 (GMIHGSFFWGYIVTQIPGGYI) threads the bilayer. Residues 138-140 (CQK) lie on the Cytoplasmic side of the membrane. The chain crosses the membrane as a helical span at residues 141-161 (FAANRVFGFAIVATSTLNMLI). Topologically, residues 162–168 (PSAARVH) are vesicular. Residues 169 to 189 (FACVICVRILQGLVEGVTYPA) traverse the membrane as a helical segment. At 190-208 (CHGIWSKWAPPLERSRLAT) the chain is on the cytoplasmic side. The helical transmembrane segment at 209–229 (TAFCGSYAGAVVAMPLAGVLV) threads the bilayer. Over 230–236 (QYSGWSS) the chain is Vesicular. The chain crosses the membrane as a helical span at residues 237–257 (VFYVYGSFGIMWYMFWILVSY). The Cytoplasmic portion of the chain corresponds to 258–302 (ESPAIHPTISEEEKKYIEESIGESTGLMNPMAKFKAPWRKFFTSM). A helical membrane pass occupies residues 303–323 (PVYAIIVANFCRSWTFYLLLI). Topologically, residues 324–341 (SQPAYFEEVFGFEISKVG) are vesicular. A helical transmembrane segment spans residues 342–362 (LLSALPHLVMTIIVPIGGQIA). The Cytoplasmic segment spans residues 363–378 (DFLRTKRIMSTTNVRK). The chain crosses the membrane as a helical span at residues 379 to 399 (MMNCGGFGMEATLLLVVGYSH). At 400–401 (SR) the chain is on the vesicular side. Residues 402 to 422 (GVAISFLVLAVGFSGFAISGF) traverse the membrane as a helical segment. The Cytoplasmic segment spans residues 423 to 435 (NVNHLDIAPRYAS). Residues 436 to 456 (ILMGISNGVGTLSGMVCPLIV) traverse the membrane as a helical segment. Residues 457-469 (GAMTKHKTREEWQ) are Vesicular-facing. The chain crosses the membrane as a helical span at residues 470–490 (YVFLIASLVHYGGVLFYGIFA). Over 491 to 576 (SGEKQPWAEP…YGTVAERDLS (86 aa)) the chain is Cytoplasmic. The disordered stretch occupies residues 517–547 (ADESEEQSQAYGAYGSYGATQTTSQQNGGWT). A compositionally biased stretch (polar residues) spans 534 to 545 (GATQTTSQQNGG).

It belongs to the major facilitator superfamily. Sodium/anion cotransporter family. VGLUT subfamily.

The protein resides in the cytoplasmic vesicle. It localises to the secretory vesicle. Its subcellular location is the synaptic vesicle membrane. It is found in the cell membrane. The protein localises to the synapse. The protein resides in the synaptosome. The catalysed reaction is L-glutamate(out) = L-glutamate(in). The enzyme catalyses chloride(in) = chloride(out). It carries out the reaction 3 Na(+)(out) + phosphate(out) = 3 Na(+)(in) + phosphate(in). It catalyses the reaction phosphate(in) = phosphate(out). The catalysed reaction is K(+)(in) + H(+)(out) = K(+)(out) + H(+)(in). With respect to regulation, chloride channel activity is allosterically activated by lumenal H(+) and Cl(-) leading to synaptic vesicles acidification. The L-glutamate transport activity is allosterically activated by lumenal H(+) and Cl(-). The allosteric activation by H(+) efficiently prevents non-vesicular efflux across the plasma membrane, thereby restricting L-glutamate transport activity to acidic membranes such as synaptic vesicles. Functionally, multifunctional transporter that transports L-glutamate as well as multiple ions such as chloride, proton, potassium, sodium and phosphate. At the synaptic vesicle membrane, mainly functions as an uniporter which transports preferentially L-glutamate but also phosphate from the cytoplasm into synaptic vesicles at presynaptic nerve terminals of excitatory neural cells. The L-glutamate or phosphate uniporter activity is electrogenic and is driven by the proton electrochemical gradient, mainly by the electrical gradient established by the vacuolar H(+)-ATPase across the synaptic vesicle membrane. In addition, functions as a chloride channel that allows a chloride permeation through the synaptic vesicle membrane that affects the proton electrochemical gradient and promotes synaptic vesicles acidification. Moreover, may function as a K(+)/H(+) antiport allowing to maintain the electrical gradient and to decrease chemical gradient and therefore sustain vesicular glutamate uptake. The vesicular K(+)/H(+) antiport activity is electroneutral. At the plasma membrane, following exocytosis, functions as a symporter of Na(+) and phosphate from the extracellular space to the cytoplasm allowing synaptic phosphate homeostasis regulation. The symporter activity is driven by an inside negative membrane potential and is electrogenic. Is necessary for synaptic signaling of visual-evoked responses from photoreceptors. The chain is Vesicular glutamate transporter 1 from Xenopus tropicalis (Western clawed frog).